We begin with the raw amino-acid sequence, 344 residues long: Methylthioribose-1-phosphate isomerase (344 aa).

Residues 46 to 48 (RGA), Arg-89, and Gln-196 contribute to the substrate site. Asp-237 functions as the Proton donor in the catalytic mechanism. 247–248 (NK) serves as a coordination point for substrate.

This sequence belongs to the eIF-2B alpha/beta/delta subunits family. MtnA subfamily.

It carries out the reaction 5-(methylsulfanyl)-alpha-D-ribose 1-phosphate = 5-(methylsulfanyl)-D-ribulose 1-phosphate. It participates in amino-acid biosynthesis; L-methionine biosynthesis via salvage pathway; L-methionine from S-methyl-5-thio-alpha-D-ribose 1-phosphate: step 1/6. Functionally, catalyzes the interconversion of methylthioribose-1-phosphate (MTR-1-P) into methylthioribulose-1-phosphate (MTRu-1-P). The sequence is that of Methylthioribose-1-phosphate isomerase from Syntrophotalea carbinolica (strain DSM 2380 / NBRC 103641 / GraBd1) (Pelobacter carbinolicus).